The chain runs to 132 residues: Fatty acid-binding protein, brain (132 aa).

N-acetylvaline is present on valine 2. A fatty acid is bound at residue arginine 127–tyrosine 129.

It belongs to the calycin superfamily. Fatty-acid binding protein (FABP) family.

The protein localises to the cytoplasm. Its function is as follows. FABPs are thought to play a role in the intracellular transport of long-chain fatty acids and their acyl-CoA esters. This is Fatty acid-binding protein, brain (FABP7) from Gallus gallus (Chicken).